The chain runs to 150 residues: UPF0756 membrane protein ABAYE1440 (150 aa).

A run of 4 helical transmembrane segments spans residues M1–L21, F45–V65, F83–G103, and V115–V135.

The protein belongs to the UPF0756 family.

Its subcellular location is the cell membrane. This Acinetobacter baumannii (strain AYE) protein is UPF0756 membrane protein ABAYE1440.